Reading from the N-terminus, the 134-residue chain is Interleukin-4 (134 aa).

Positions 1 to 23 (MGLTYQLLPALVCLLACTSFIQG) are cleaved as a signal peptide. Cystine bridges form between cysteine 24/cysteine 133 and cysteine 48/cysteine 88. An N-linked (GlcNAc...) asparagine glycan is attached at asparagine 38. N-linked (GlcNAc...) asparagine glycosylation is present at asparagine 101.

This sequence belongs to the IL-4/IL-13 family.

The protein resides in the secreted. Participates in at least several B-cell activation processes as well as of other cell types. It is a costimulator of DNA-synthesis. It induces the expression of class II MHC molecules on resting B-cells. It enhances both secretion and cell surface expression of IgE and IgG1. It also regulates the expression of the low affinity Fc receptor for IgE (CD23) on both lymphocytes and monocytes. Positively regulates IL31RA expression in macrophages. Stimulates autophagy in dendritic cells by interfering with mTORC1 signaling and through the induction of RUFY4. The sequence is that of Interleukin-4 (IL4) from Equus caballus (Horse).